Here is a 124-residue protein sequence, read N- to C-terminus: Small ribosomal subunit protein uS12 (124 aa).

Asp-89 bears the 3-methylthioaspartic acid mark.

This sequence belongs to the universal ribosomal protein uS12 family. As to quaternary structure, part of the 30S ribosomal subunit. Contacts proteins S8 and S17. May interact with IF1 in the 30S initiation complex.

Its function is as follows. With S4 and S5 plays an important role in translational accuracy. In terms of biological role, interacts with and stabilizes bases of the 16S rRNA that are involved in tRNA selection in the A site and with the mRNA backbone. Located at the interface of the 30S and 50S subunits, it traverses the body of the 30S subunit contacting proteins on the other side and probably holding the rRNA structure together. The combined cluster of proteins S8, S12 and S17 appears to hold together the shoulder and platform of the 30S subunit. The sequence is that of Small ribosomal subunit protein uS12 from Aeromonas hydrophila subsp. hydrophila (strain ATCC 7966 / DSM 30187 / BCRC 13018 / CCUG 14551 / JCM 1027 / KCTC 2358 / NCIMB 9240 / NCTC 8049).